Here is a 226-residue protein sequence, read N- to C-terminus: ATP synthase F(0) complex subunit a (226 aa).

The next 6 helical transmembrane spans lie at 6–26 (FASFIAPTMMGLPIVTLIIMF), 68–88 (WSLMLMSLIMFIGSTNILGLL), 97–117 (QLSMNLGMAIPLWSATVFTGF), 136–156 (LLIPMLVIIETISLFIQPVAL), 164–184 (ITAGHLLIHLIGGATLALLNI), and 189–209 (AFITFTILILLTILEFAVALI).

The protein belongs to the ATPase A chain family. In terms of assembly, component of the ATP synthase complex composed at least of ATP5F1A/subunit alpha, ATP5F1B/subunit beta, ATP5MC1/subunit c (homooctomer), MT-ATP6/subunit a, MT-ATP8/subunit 8, ATP5ME/subunit e, ATP5MF/subunit f, ATP5MG/subunit g, ATP5MK/subunit k, ATP5MJ/subunit j, ATP5F1C/subunit gamma, ATP5F1D/subunit delta, ATP5F1E/subunit epsilon, ATP5PF/subunit F6, ATP5PB/subunit b, ATP5PD/subunit d, ATP5PO/subunit OSCP. ATP synthase complex consists of a soluble F(1) head domain (subunits alpha(3) and beta(3)) - the catalytic core - and a membrane F(0) domain - the membrane proton channel (subunits c, a, 8, e, f, g, k and j). These two domains are linked by a central stalk (subunits gamma, delta, and epsilon) rotating inside the F1 region and a stationary peripheral stalk (subunits F6, b, d, and OSCP). Interacts with DNAJC30; interaction is direct.

The protein resides in the mitochondrion inner membrane. The catalysed reaction is H(+)(in) = H(+)(out). In terms of biological role, subunit a, of the mitochondrial membrane ATP synthase complex (F(1)F(0) ATP synthase or Complex V) that produces ATP from ADP in the presence of a proton gradient across the membrane which is generated by electron transport complexes of the respiratory chain. ATP synthase complex consist of a soluble F(1) head domain - the catalytic core - and a membrane F(1) domain - the membrane proton channel. These two domains are linked by a central stalk rotating inside the F(1) region and a stationary peripheral stalk. During catalysis, ATP synthesis in the catalytic domain of F(1) is coupled via a rotary mechanism of the central stalk subunits to proton translocation. With the subunit c (ATP5MC1), forms the proton-conducting channel in the F(0) domain, that contains two crucial half-channels (inlet and outlet) that facilitate proton movement from the mitochondrial intermembrane space (IMS) into the matrix. Protons are taken up via the inlet half-channel and released through the outlet half-channel, following a Grotthuss mechanism. This chain is ATP synthase F(0) complex subunit a, found in Sus scrofa (Pig).